The sequence spans 349 residues: MTYTLAEIAIKLDAKLIVPAALDEQNEALTQISGLATLAKAGTGQVAFLANSKYQQQLSSTNASAVIVSPDAVEACQVSALVMDNPYMGYAMLASLLDSTPKVSCGIHPNAVIADDVLIGENVSVGANTVIESGVQLADNVSIGAGCFIGHGAKIGESTILWANITIYHRVEIGHHCLIQASTVIGSDGFGYAPVKGQYKWHKIPQLGSVIIGDHVEIGASTTIDRGALDNTEIRDGVILDNQIQIAHNVIVGENTAIAGCTVIAGSTVIGKNCTIAGLVGVNGHITIADNCVFTGMSMVTKNISQAGVYSSGMPVVQNKEWNKTNARVKRLDSLTKRVKELEKLLAKN.

Catalysis depends on His248, which acts as the Proton acceptor.

It belongs to the transferase hexapeptide repeat family. LpxD subfamily. Homotrimer.

The catalysed reaction is a UDP-3-O-[(3R)-3-hydroxyacyl]-alpha-D-glucosamine + a (3R)-hydroxyacyl-[ACP] = a UDP-2-N,3-O-bis[(3R)-3-hydroxyacyl]-alpha-D-glucosamine + holo-[ACP] + H(+). It functions in the pathway bacterial outer membrane biogenesis; LPS lipid A biosynthesis. Functionally, catalyzes the N-acylation of UDP-3-O-acylglucosamine using 3-hydroxyacyl-ACP as the acyl donor. Is involved in the biosynthesis of lipid A, a phosphorylated glycolipid that anchors the lipopolysaccharide to the outer membrane of the cell. The protein is UDP-3-O-acylglucosamine N-acyltransferase of Colwellia psychrerythraea (strain 34H / ATCC BAA-681) (Vibrio psychroerythus).